The primary structure comprises 100 residues: EKC/KEOPS complex subunit GON7 (100 aa).

Met1 bears the N-acetylmethionine mark. The disordered stretch occupies residues 61–100 (AAAPDEDLDGDDEDDAEDENNIDNRTNFDGPSAKRPKTPS). Positions 64–81 (PDEDLDGDDEDDAEDENN) are enriched in acidic residues.

Component of the EKC/KEOPS complex composed of at least GON7, TP53RK, TPRKB, OSGEP and LAGE3; the whole complex dimerizes.

The protein resides in the nucleus. Component of the EKC/KEOPS complex that is required for the formation of a threonylcarbamoyl group on adenosine at position 37 (t(6)A37) in tRNAs that read codons beginning with adenine. The complex is probably involved in the transfer of the threonylcarbamoyl moiety of threonylcarbamoyl-AMP (TC-AMP) to the N6 group of A37. GON7 plays a supporting role to the catalytic subunit OSGEP in the complex. This is EKC/KEOPS complex subunit GON7 from Homo sapiens (Human).